The sequence spans 454 residues: Asparagine--tRNA ligase (454 aa).

The protein belongs to the class-II aminoacyl-tRNA synthetase family. Homodimer.

It is found in the cytoplasm. The catalysed reaction is tRNA(Asn) + L-asparagine + ATP = L-asparaginyl-tRNA(Asn) + AMP + diphosphate + H(+). This is Asparagine--tRNA ligase from Ureaplasma urealyticum serovar 10 (strain ATCC 33699 / Western).